A 946-amino-acid polypeptide reads, in one-letter code: MNKKLKLFSMPGAQTSQIVIMLFQSLLHLLEAIASREPTRYIITYSIGNTHTPEIFSYSDLLQSARKAAGALRFKYHVVPGSVVLLHFNDHWNSMLWFWATLIADCIPAMSTPFSNNPETRLRHLKHLSTTLRSPKCLTTASLAAEFAGQEYITPICVQSLDYENLVHLPIKEGGDIAVLMFTSGSSGHCKVVPLTHEQILASLSGKAWTFPLPDNTAQLNWVGMNHVASLVEVHLFSIYTHSDQVHIPTVEVLSHVTLFLDLIHRHRVSRTFAPNFFLAKLRAALSADDTLAKYTGSLSNLRYIVSGGEANVTQTINDLAQMLKKCGAVSNVIVPAFGMTETCAGAIYNTSFPQYDVEHGLPFASVGSCMPGIQVRIVQLNGNGNSVPPGTVGNLEICGPVVLKGYFNDPAATKSTFTNDNWFKTGDLAFVDDNGMLVLAGREKDSIIVNGANYSPHDIESAIDEANIPGLISGFTCCFSTFPPSADTEEVIIVYLPNYTPADTVRRSETAAAIRKVAMMSVGVRATVLPLDRTMLEKSTLGKLARGKIKAAYERGDYKSYQEANEQMMALHHKVSHHQPRSGLEQSLLGVFTRTIPENLTEDFDVLTSIFDLGITSIELLKLKRGIEDLIGHGQIPLITLMTNPTIRTLSDALKQHAQQRDCSIYNPVVVLQSQGKKPPIWLVHPVGGEVMIFMNLAKFIIDRPVYGLRARGFNDGEDPFHTFEEIVSTYHASIKEKQPSGPYAIAGYSYGAKVAFDIAKALEHNGDEVRFLGLLDLPPSLNGTQMRAVAWKEMLLHICRMVGVIREEGIKKIYPRLEPENISPRHAIETVMGEADVTRLAELGLTASALERWANLTHALQRCIVDHKTNGSVAGADAFYCDPMASMAISNEQWACDYIGKWSDHTRSPPRFHHIAGTHYTILDAENIFSFQKTFLRALNDRGI.

The segment at 32-450 is adenylation (A) domain; the sequence is AIASREPTRY…AGREKDSIIV (419 aa). The 80-residue stretch at 580-659 folds into the Carrier domain; the sequence is QPRSGLEQSL…TLSDALKQHA (80 aa). The residue at position 618 (Ser618) is an O-(pantetheine 4'-phosphoryl)serine. The thioesterase (TE) domain stretch occupies residues 681–933; sequence PIWLVHPVGG…ILDAENIFSF (253 aa).

The protein belongs to the NRP synthetase family.

It carries out the reaction 2 3-phenylpyruvate + H(+) = phenguignardate + H2O. Functionally, nonribosomal peptide synthetase that mediates the biosynthesis of phenguignardic acid. PngA alone is sufficient for phenguignardic acid synthesis. PngA first activates phenylpyruvic acid (PPA) through its A domain to AMP-PPA. The PPA unit is then loaded to the T domain and eventually transferred to the TE domain. Another PPA unit is then loaded onto the T domain. The TE domain likely promotes the enolate formation on the attached unit, followed by a nucleophilic attack on the carbonyl to yield an ether linkage between the two units. Finally, the TE domain probably catalyzes a similar reaction to give the cyclized dioxolanone core and releases phenguignardic acid. The sequence is that of Nonribosomal peptide synthetase pngA from Aspergillus terreus (strain NIH 2624 / FGSC A1156).